Consider the following 436-residue polypeptide: Glutamate-1-semialdehyde 2,1-aminomutase (436 aa).

Position 272 is an N6-(pyridoxal phosphate)lysine (lysine 272).

The protein belongs to the class-III pyridoxal-phosphate-dependent aminotransferase family. HemL subfamily. As to quaternary structure, homodimer. Pyridoxal 5'-phosphate is required as a cofactor.

It is found in the cytoplasm. It catalyses the reaction (S)-4-amino-5-oxopentanoate = 5-aminolevulinate. It participates in porphyrin-containing compound metabolism; protoporphyrin-IX biosynthesis; 5-aminolevulinate from L-glutamyl-tRNA(Glu): step 2/2. It functions in the pathway porphyrin-containing compound metabolism; chlorophyll biosynthesis. This is Glutamate-1-semialdehyde 2,1-aminomutase from Methylibium petroleiphilum (strain ATCC BAA-1232 / LMG 22953 / PM1).